Here is a 423-residue protein sequence, read N- to C-terminus: Enolase (423 aa).

Residue Q166 coordinates (2R)-2-phosphoglycerate. The active-site Proton donor is E208. D242, E283, and D310 together coordinate Mg(2+). (2R)-2-phosphoglycerate contacts are provided by K335, R364, S365, and K386. The active-site Proton acceptor is the K335.

Belongs to the enolase family. Mg(2+) serves as cofactor.

Its subcellular location is the cytoplasm. It localises to the secreted. The protein resides in the cell surface. It catalyses the reaction (2R)-2-phosphoglycerate = phosphoenolpyruvate + H2O. Its pathway is carbohydrate degradation; glycolysis; pyruvate from D-glyceraldehyde 3-phosphate: step 4/5. Its function is as follows. Catalyzes the reversible conversion of 2-phosphoglycerate (2-PG) into phosphoenolpyruvate (PEP). It is essential for the degradation of carbohydrates via glycolysis. This Elusimicrobium minutum (strain Pei191) protein is Enolase.